Here is a 298-residue protein sequence, read N- to C-terminus: ATP synthase gamma chain (298 aa).

It belongs to the ATPase gamma chain family. F-type ATPases have 2 components, CF(1) - the catalytic core - and CF(0) - the membrane proton channel. CF(1) has five subunits: alpha(3), beta(3), gamma(1), delta(1), epsilon(1). CF(0) has three main subunits: a, b and c.

The protein localises to the cell inner membrane. In terms of biological role, produces ATP from ADP in the presence of a proton gradient across the membrane. The gamma chain is believed to be important in regulating ATPase activity and the flow of protons through the CF(0) complex. This chain is ATP synthase gamma chain, found in Wolinella succinogenes (strain ATCC 29543 / DSM 1740 / CCUG 13145 / JCM 31913 / LMG 7466 / NCTC 11488 / FDC 602W) (Vibrio succinogenes).